We begin with the raw amino-acid sequence, 600 residues long: Copine-A (600 aa).

2 consecutive C2 domains span residues 1 to 111 and 116 to 246; these read MNLK…TVCL and KSGK…NVIN. Residues D23, D29, D82, D84, D89, D151, D158, D215, D217, and D223 each contribute to the Ca(2+) site. The VWFA domain occupies 286-503; that stretch reads NLIVGIDCTA…ELAAEVLREI (218 aa). Over residues 535 to 549 the composition is skewed to low complexity; sequence YDNPTTTTTATSPST. The tract at residues 535–583 is disordered; the sequence is YDNPTTTTTATSPSTGIDLNKGSNVGLNLTKTESSPSPSGGAGIDLNKG. The span at 555–572 shows a compositional bias: polar residues; sequence KGSNVGLNLTKTESSPSP.

This sequence belongs to the copine family. It depends on Ca(2+) as a cofactor.

The protein resides in the cytoplasm. The protein localises to the membrane. Its function is as follows. Required for cytokinesis, contractile vacuole function and development. The polypeptide is Copine-A (cpnA) (Dictyostelium discoideum (Social amoeba)).